The primary structure comprises 771 residues: Probable aconitate hydratase, mitochondrial (771 aa).

Substrate is bound by residues Q86 and 179–181; that span reads DSH. C372, C435, and C438 together coordinate [4Fe-4S] cluster. Residues R461, R466, R594, and 657-658 each bind substrate; that span reads SR.

This sequence belongs to the aconitase/IPM isomerase family. Monomer. [4Fe-4S] cluster serves as cofactor.

It localises to the mitochondrion. The enzyme catalyses citrate = D-threo-isocitrate. Its pathway is carbohydrate metabolism; tricarboxylic acid cycle; isocitrate from oxaloacetate: step 2/2. In terms of biological role, catalyzes the isomerization of citrate to isocitrate via cis-aconitate. This Dictyostelium discoideum (Social amoeba) protein is Probable aconitate hydratase, mitochondrial (aco2).